We begin with the raw amino-acid sequence, 528 residues long: Protein spinster homolog 1 (528 aa).

Residues 1–38 (MAGSDTAPFLSQADDPDDGPAPGHPGLPGPMGNPKSGE) are disordered. An N-acetylalanine modification is found at Ala2. 12 consecutive transmembrane segments (helical) span residues 60-80 (LIVV…FTVA), 98-118 (GLIQ…FGYL), 126-146 (YLMC…SFIP), 160-180 (VGVG…DLFV), 187-207 (MLSI…IAGS), 218-238 (WALR…FLVV), 278-298 (LGFT…PAFL), 323-343 (LIFG…GVEI), 357-377 (LVCA…LACA), 381-401 (IVAT…NWAI), 421-441 (FQIV…IGLI), and 465-485 (MLCA…AMFI). Ser518 is subject to Phosphoserine.

Belongs to the major facilitator superfamily. Spinster (TC 2.A.1.49) family. As to quaternary structure, interacts with BCL2 and BCL2L1. Expressed in liver (at mRNA and protein levels).

It is found in the lysosome membrane. The catalysed reaction is a 1-acyl-sn-glycero-3-phosphocholine(out) + H(+)(out) = a 1-acyl-sn-glycero-3-phosphocholine(in) + H(+)(in). The enzyme catalyses 1-hexadecanoyl-sn-glycero-3-phosphocholine(out) + H(+)(out) = 1-hexadecanoyl-sn-glycero-3-phosphocholine(in) + H(+)(in). It carries out the reaction 1-(9Z-octadecenoyl)-sn-glycero-3-phosphocholine(out) + H(+)(out) = 1-(9Z-octadecenoyl)-sn-glycero-3-phosphocholine(in) + H(+)(in). It catalyses the reaction 1-(5Z,8Z,11Z,14Z-eicosatetraenoyl)-sn-glycero-3-phosphocholine(out) + H(+)(out) = 1-(5Z,8Z,11Z,14Z-eicosatetraenoyl)-sn-glycero-3-phosphocholine(in) + H(+)(in). The catalysed reaction is 1-(4Z,7Z,10Z,13Z,16Z,19Z-docosahexaenoyl)-sn-glycero-3-phosphocholine(out) + H(+)(out) = 1-(4Z,7Z,10Z,13Z,16Z,19Z-docosahexaenoyl)-sn-glycero-3-phosphocholine(in) + H(+)(in). The enzyme catalyses a 1-acyl-sn-glycero-3-phosphoethanolamine(out) + H(+)(out) = a 1-acyl-sn-glycero-3-phosphoethanolamine(in) + H(+)(in). It carries out the reaction 1-(9Z-octadecenoyl)-sn-glycero-3-phosphoethanolamine(out) + H(+)(out) = 1-(9Z-octadecenoyl)-sn-glycero-3-phosphoethanolamine(in) + H(+)(in). It catalyses the reaction 1-acyl-sn-glycero-3-phospho-(1'-sn-glycerol)(out) + H(+)(out) = 1-acyl-sn-glycero-3-phospho-(1'-sn-glycerol)(in) + H(+)(in). The catalysed reaction is 1-(9Z-octadecenoyl)-sn-glycero-3-phospho-(1'-sn-glycerol)(out) + H(+)(out) = 1-(9Z-octadecenoyl)-sn-glycero-3-phospho-(1'-sn-glycerol)(in) + H(+)(in). The enzyme catalyses a 1-O-(1Z-alkenyl)-sn-glycero-3-phosphocholine(out) + H(+)(out) = a 1-O-(1Z-alkenyl)-sn-glycero-3-phosphocholine(in) + H(+)(in). It carries out the reaction 1-(1Z-hexadecenyl)-sn-glycero-3-phosphocholine(out) + H(+)(out) = 1-(1Z-hexadecenyl)-sn-glycero-3-phosphocholine(in) + H(+)(in). It catalyses the reaction a 1-O-(1Z-alkenyl)-sn-glycero-3-phosphoethanolamine(out) + H(+)(out) = a 1-O-(1Z-alkenyl)-sn-glycero-3-phosphoethanolamine(in) + H(+)(in). The catalysed reaction is 1-O-(1Z-hexadecenyl)-sn-glycero-3-phosphoethanolamine(out) + H(+)(out) = 1-O-(1Z-hexadecenyl)-sn-glycero-3-phosphoethanolamine(in) + H(+)(in). Its function is as follows. Plays a critical role in the phospholipid salvage pathway from lysosomes to the cytosol. Mediates the rate-limiting, proton-dependent, lysosomal efflux of lysophospholipids, which can then be reacylated by acyltransferases in the endoplasmic reticulum to form phospholipids. Selective for zwitterionic headgroups such as lysophosphatidylcholine (LPC) and lysophosphatidylethanolamine (LPE), can also transport lysophosphatidylglycerol (LPG), but not other anionic lysophospholipids, sphingosine, nor sphingomyelin. Transports lysophospholipids with saturated, monounsaturated, and polyunsaturated fatty acids, such as 1-hexadecanoyl-sn-glycero-3-phosphocholine, 1-(9Z-octadecenoyl)-sn-glycero-3-phosphocholine and 1-(4Z,7Z,10Z,13Z,16Z,19Z-docosahexaenoyl)-sn-glycero-3-phosphocholine, respectively. Can also transport lysoplasmalogen (LPC with a fatty alcohol) such as 1-(1Z-hexadecenyl)-sn-glycero-3-phosphocholine. Essential player in lysosomal homeostasis. Crucial for cell survival under conditions of nutrient limitation. May be involved in necrotic or autophagic cell death. This Mus musculus (Mouse) protein is Protein spinster homolog 1 (Spns1).